The chain runs to 616 residues: Dihydroxy-acid dehydratase (616 aa).

Position 81 (D81) interacts with Mg(2+). Position 122 (C122) interacts with [2Fe-2S] cluster. 2 residues coordinate Mg(2+): D123 and K124. At K124 the chain carries N6-carboxylysine. C195 is a binding site for [2Fe-2S] cluster. E491 provides a ligand contact to Mg(2+). Catalysis depends on S517, which acts as the Proton acceptor.

This sequence belongs to the IlvD/Edd family. Homodimer. The cofactor is [2Fe-2S] cluster. It depends on Mg(2+) as a cofactor.

The enzyme catalyses (2R)-2,3-dihydroxy-3-methylbutanoate = 3-methyl-2-oxobutanoate + H2O. It catalyses the reaction (2R,3R)-2,3-dihydroxy-3-methylpentanoate = (S)-3-methyl-2-oxopentanoate + H2O. It functions in the pathway amino-acid biosynthesis; L-isoleucine biosynthesis; L-isoleucine from 2-oxobutanoate: step 3/4. The protein operates within amino-acid biosynthesis; L-valine biosynthesis; L-valine from pyruvate: step 3/4. Functions in the biosynthesis of branched-chain amino acids. Catalyzes the dehydration of (2R,3R)-2,3-dihydroxy-3-methylpentanoate (2,3-dihydroxy-3-methylvalerate) into 2-oxo-3-methylpentanoate (2-oxo-3-methylvalerate) and of (2R)-2,3-dihydroxy-3-methylbutanoate (2,3-dihydroxyisovalerate) into 2-oxo-3-methylbutanoate (2-oxoisovalerate), the penultimate precursor to L-isoleucine and L-valine, respectively. This is Dihydroxy-acid dehydratase from Tolumonas auensis (strain DSM 9187 / NBRC 110442 / TA 4).